A 185-amino-acid chain; its full sequence is Ribosome-recycling factor (185 aa).

It belongs to the RRF family.

The protein resides in the cytoplasm. Functionally, responsible for the release of ribosomes from messenger RNA at the termination of protein biosynthesis. May increase the efficiency of translation by recycling ribosomes from one round of translation to another. The polypeptide is Ribosome-recycling factor (Teredinibacter turnerae (strain ATCC 39867 / T7901)).